Consider the following 199-residue polypeptide: NAD(P)H dehydrogenase (quinone) (199 aa).

One can recognise a Flavodoxin-like domain in the interval 4–190 (VLVLYYSAYG…AGARYQGKTI (187 aa)). Residues 10–15 (SAYGHI) and 78–80 (TRF) contribute to the FMN site. Residue Y12 participates in NAD(+) binding. W98 contributes to the substrate binding site. FMN contacts are provided by residues 113 to 119 (STATQHG) and H134.

This sequence belongs to the WrbA family. FMN serves as cofactor.

The catalysed reaction is a quinone + NADH + H(+) = a quinol + NAD(+). It catalyses the reaction a quinone + NADPH + H(+) = a quinol + NADP(+). This is NAD(P)H dehydrogenase (quinone) from Rhodopseudomonas palustris (strain HaA2).